The following is a 249-amino-acid chain: MEIKHLLFLVAAACLLPVLSMKRKSAKKLFNKLVTDLPNVQQEIVNIHNTLRRGVVPPASNMLKMSWSEEAAQNAKIFSRYCDMTESNPLERRLPNTFCGENRNMTSYPVSWSSVIGVWYSESKYFRYGLWPSTDDDISTDRYTQIVWATSYLIGCAIAPCRHRGSPRYFYVCHYCHEGNDPETKHEPYKKGVPCEACPNNCEDKLCTNPCIYYDEYTDCSLEVRFLGCNHSTPRMFCKATCLCDTEIK.

The N-terminal stretch at 1–20 is a signal peptide; the sequence is MEIKHLLFLVAAACLLPVLS. One can recognise an SCP domain in the interval 45 to 175; the sequence is VNIHNTLRRG…SPRYFYVCHY (131 aa). Asn104 carries an N-linked (GlcNAc...) asparagine glycan. 5 cysteine pairs are disulfide-bonded: Cys195-Cys202, Cys198-Cys207, Cys211-Cys244, Cys220-Cys238, and Cys229-Cys242. A ShKT domain is found at 211 to 244; it reads CIYYDEYTDCSLEVRFLGCNHSTPRMFCKATCLC. A glycan (N-linked (GlcNAc...) asparagine) is linked at Asn230.

It belongs to the CRISP family. In terms of tissue distribution, expressed in all the regions of the epididymis except the caput and is not detected in the testis, prostate, seminal vesicle, and brain.

In terms of biological role, may have a role in sperm-egg fusion and maturation. In Macaca mulatta (Rhesus macaque), this protein is Cysteine-rich secretory protein 1 (CRISP1).